The primary structure comprises 146 residues: MFAVIKTGGRQYRVVPDDVLEIGKIAGEVGTIVQLGEVLVLGGDTPVLGAPTVAGASIAAEVLQHKRGPKVIAFKKRRRKHSKRKRGYRDEITVLRVTEILADGKSPTIGPRPKKEKAVEPVEGASDDKPRRAAKKTAAKTAEDAD.

A disordered region spans residues 103–146; the sequence is DGKSPTIGPRPKKEKAVEPVEGASDDKPRRAAKKTAAKTAEDAD. Residues 116 to 131 are compositionally biased toward basic and acidic residues; sequence EKAVEPVEGASDDKPR.

It belongs to the bacterial ribosomal protein bL21 family. As to quaternary structure, part of the 50S ribosomal subunit. Contacts protein L20.

This protein binds to 23S rRNA in the presence of protein L20. This Nitrobacter winogradskyi (strain ATCC 25391 / DSM 10237 / CIP 104748 / NCIMB 11846 / Nb-255) protein is Large ribosomal subunit protein bL21.